Reading from the N-terminus, the 570-residue chain is Sulfite reductase [NADPH] hemoprotein beta-component (570 aa).

4 residues coordinate [4Fe-4S] cluster: Cys-434, Cys-440, Cys-479, and Cys-483. Cys-483 lines the siroheme pocket.

Belongs to the nitrite and sulfite reductase 4Fe-4S domain family. Alpha(8)-beta(8). The alpha component is a flavoprotein, the beta component is a hemoprotein. Siroheme is required as a cofactor. It depends on [4Fe-4S] cluster as a cofactor.

The catalysed reaction is hydrogen sulfide + 3 NADP(+) + 3 H2O = sulfite + 3 NADPH + 4 H(+). It functions in the pathway sulfur metabolism; hydrogen sulfide biosynthesis; hydrogen sulfide from sulfite (NADPH route): step 1/1. In terms of biological role, component of the sulfite reductase complex that catalyzes the 6-electron reduction of sulfite to sulfide. This is one of several activities required for the biosynthesis of L-cysteine from sulfate. This is Sulfite reductase [NADPH] hemoprotein beta-component from Escherichia fergusonii (strain ATCC 35469 / DSM 13698 / CCUG 18766 / IAM 14443 / JCM 21226 / LMG 7866 / NBRC 102419 / NCTC 12128 / CDC 0568-73).